Here is a 138-residue protein sequence, read N- to C-terminus: 6,7-dimethyl-8-ribityllumazine synthase (138 aa).

5-amino-6-(D-ribitylamino)uracil contacts are provided by residues phenylalanine 13, 45-47, and 69-71; these read VFD and AVI. 74 to 75 is a (2S)-2-hydroxy-3-oxobutyl phosphate binding site; it reads AT. Histidine 77 functions as the Proton donor in the catalytic mechanism. Leucine 102 contributes to the 5-amino-6-(D-ribitylamino)uracil binding site. (2S)-2-hydroxy-3-oxobutyl phosphate is bound at residue arginine 117.

This sequence belongs to the DMRL synthase family.

The enzyme catalyses (2S)-2-hydroxy-3-oxobutyl phosphate + 5-amino-6-(D-ribitylamino)uracil = 6,7-dimethyl-8-(1-D-ribityl)lumazine + phosphate + 2 H2O + H(+). Its pathway is cofactor biosynthesis; riboflavin biosynthesis; riboflavin from 2-hydroxy-3-oxobutyl phosphate and 5-amino-6-(D-ribitylamino)uracil: step 1/2. Its function is as follows. Catalyzes the formation of 6,7-dimethyl-8-ribityllumazine by condensation of 5-amino-6-(D-ribitylamino)uracil with 3,4-dihydroxy-2-butanone 4-phosphate. This is the penultimate step in the biosynthesis of riboflavin. The sequence is that of 6,7-dimethyl-8-ribityllumazine synthase from Methanobrevibacter smithii (strain ATCC 35061 / DSM 861 / OCM 144 / PS).